Reading from the N-terminus, the 810-residue chain is Zinc finger CCCH domain-containing protein 11A (810 aa).

3 C3H1-type zinc fingers span residues 2-29 (PNQG…HCEA), 31-57 (IGNE…HMEI), and 60-86 (KRSE…HHNR). Ser108 carries the phosphoserine modification. Residues Lys114 and Lys124 each participate in a glycyl lysine isopeptide (Lys-Gly) (interchain with G-Cter in SUMO2) cross-link. Ser132 bears the Phosphoserine mark. 4 disordered regions span residues 139–194 (MKVE…GLRV), 223–258 (KKMK…ENVR), 285–351 (GKRK…DKVN), and 367–432 (ERAS…TTCI). Residue Lys140 forms a Glycyl lysine isopeptide (Lys-Gly) (interchain with G-Cter in SUMO2) linkage. Phosphoserine occurs at positions 149 and 171. The span at 160-175 (ADDDEDDDDQFSEEGD) shows a compositional bias: acidic residues. The residue at position 290 (Ser290) is a Phosphoserine. Composition is skewed to basic and acidic residues over residues 309 to 322 (KKVE…DKTP) and 367 to 390 (ERAS…KTDD). Residue Thr321 is modified to Phosphothreonine. Residues 362 to 423 (EEILLERASQ…KHRQQEAERQ (62 aa)) are a coiled coil. Ser370 bears the Phosphoserine mark. Residues 391–402 (STSGARSSSTIR) are compositionally biased toward polar residues. A compositionally biased stretch (basic and acidic residues) spans 417–432 (QQEAERQKSKKDTTCI). A Glycyl lysine isopeptide (Lys-Gly) (interchain with G-Cter in SUMO2) cross-link involves residue Lys478. The tract at residues 482–549 (ALRVQQSSES…KEASGETTGV (68 aa)) is disordered. The segment covering 486-498 (QQSSESSTSSPSQ) has biased composition (low complexity). Lys619 participates in a covalent cross-link: Glycyl lysine isopeptide (Lys-Gly) (interchain with G-Cter in SUMO2). The interval 715–768 (TVPEAENPRDSLVLPPTQSSSDSSPPEVSGPSSSQMSMKTRRLSSASTGKPPLS) is disordered. Positions 729–748 (PPTQSSSDSSPPEVSGPSSS) are enriched in low complexity. Positions 749 to 762 (QMSMKTRRLSSAST) are enriched in polar residues.

Interacts with TREX complex components THOC2, DDX39 and POLDIP3; the interactions are ATP-dependent. Interacts with PABPN1; this interaction retains ZC3H11A in nuclear speckles. Interacts with KPNA3.

The protein localises to the nucleus. It localises to the nucleus speckle. In terms of biological role, through its association with TREX complex components, may participate in the export and post-transcriptional coordination of selected mRNA transcripts, including those required to maintain the metabolic processes in embryonic cells. Binds RNA. (Microbial infection) Plays a role in efficient growth of several nuclear-replicating viruses such as HIV-1, influenza virus or herpes simplex virus 1/HHV-1. Required for efficient viral mRNA export. May be required for proper polyadenylation of adenovirus type 5/HAdV-5 capsid mRNA. This is Zinc finger CCCH domain-containing protein 11A (ZC3H11A) from Homo sapiens (Human).